The primary structure comprises 409 residues: POU domain, class 4, transcription factor 2 (409 aa).

A disordered region spans residues Y26–P93. Residues S31–N52 are compositionally biased toward low complexity. Gly residues predominate over residues A53–R69. The required for transcriptional activation stretch occupies residues C91–H237. The POU-IV box motif lies at R110–I119. The span at A153 to A166 shows a compositional bias: low complexity. A disordered region spans residues A153–L188. The span at T170 to P184 shows a compositional bias: basic residues. The Nuclear speckle targeting signal signature appears at H171–H185. A required for DNA-binding and transcriptional repression region spans residues A238–I409. Residues D250–E327 enclose the POU-specific domain. Positions K345–K404 form a DNA-binding region, homeobox.

The protein belongs to the POU transcription factor family. Class-4 subfamily. In terms of assembly, interacts with POU4F1; this interaction inhibits both POU4F1 DNA-binding and transcriptional activities. Interacts (C-terminus) with ESR1 (via DNA-binding domain); this interaction increases the estrogen receptor ESR1 transcriptional activity in a DNA- and ligand 17-beta-estradiol-independent manner. Interacts (via C-terminus) with TP53 (via N-terminus). Interacts with DLX1 (via homeobox DNA-binding domain); this interaction suppresses DLX1-mediated transcriptional activity in postnatal retina enhancing retinal ganglion cell (RGC) differentiation. Interacts with DLX2 (via homeobox DNA-binding domain); this interaction enhances RGC differentiation. Interacts (via C-terminus) with ISL1 (via C-terminus). Interacts with ISL2. Interacts with LHX2. In terms of tissue distribution, expressed in the brain. Expressed in the ganglion cell layer of the retina.

The protein localises to the nucleus. The protein resides in the nucleus speckle. Its subcellular location is the cytoplasm. Functionally, tissue-specific DNA-binding transcription factor involved in the development and differentiation of target cells. Functions either as activator or repressor modulating the rate of target gene transcription through RNA polymerase II enzyme in a promoter-dependent manner. Binds to the consensus octamer motif 5'-AT[A/T]A[T/A]T[A/T]A-3' of promoter of target genes. Plays a fundamental role in the gene regulatory network essential for retinal ganglion cell (RGC) differentiation. Binds to an octamer site to form a ternary complex with ISL1; cooperates positively with ISL1 and ISL2 to potentiate transcriptional activation of RGC target genes being involved in RGC fate commitment in the developing retina and RGC axon formation and pathfinding. Inhibits DLX1 and DLX2 transcriptional activities preventing DLX1- and DLX2-mediated ability to promote amacrine cell fate specification. In cooperation with TP53 potentiates transcriptional activation of BAX promoter activity increasing neuronal cell apoptosis. Negatively regulates BAX promoter activity in the absence of TP53. Acts as a transcriptional coactivator via its interaction with the transcription factor ESR1 by enhancing its effect on estrogen response element (ERE)-containing promoter. Antagonizes the transcriptional stimulatory activity of POU4F1 by preventing its binding to an octamer motif. Involved in TNFSF11-mediated terminal osteoclast differentiation. The polypeptide is POU domain, class 4, transcription factor 2 (Homo sapiens (Human)).